The chain runs to 61 residues: Phosphoenolpyruvate synthase (61 aa).

Belongs to the PEP-utilizing enzyme family. Requires Mg(2+) as cofactor.

It carries out the reaction pyruvate + ATP + H2O = phosphoenolpyruvate + AMP + phosphate + 2 H(+). It participates in carbohydrate biosynthesis; gluconeogenesis. Its function is as follows. Catalyzes the phosphorylation of pyruvate to phosphoenolpyruvate. This Enterobacter agglomerans (Erwinia herbicola) protein is Phosphoenolpyruvate synthase (ppsA).